The sequence spans 220 residues: MEHPVFERDPSEKSETERREVPPLLKLALELGPLLVFFFANARGEMLIERFPILGSIGAPIFLATALFMAATVIALAISWSMTRTLPIMPLVSGIVVLVFGALTLWLHNDTFIKMKPTIVNTLFGGILLGGLFFGKSLLGYVFDSAFRLDAEGWRKLTLRWGLFFIFLAIVNEIVWRNFSTDTWVSFKVWGIMPITIVFTLLQMPLIQKHSLTDEENTAS.

6 helical membrane passes run Glu-20–Ala-40, Ile-57–Ala-77, Leu-86–Trp-106, Leu-123–Phe-143, Lys-156–Trp-176, and Phe-187–Ile-207.

The protein belongs to the YciB family.

The protein resides in the cell inner membrane. Plays a role in cell envelope biogenesis, maintenance of cell envelope integrity and membrane homeostasis. In Brucella abortus (strain S19), this protein is Inner membrane-spanning protein YciB.